The sequence spans 1387 residues: DNA-directed RNA polymerase subunit beta (1387 aa).

It belongs to the RNA polymerase beta chain family. The RNAP catalytic core consists of 2 alpha, 1 beta, 1 beta' and 1 omega subunit. When a sigma factor is associated with the core the holoenzyme is formed, which can initiate transcription.

It carries out the reaction RNA(n) + a ribonucleoside 5'-triphosphate = RNA(n+1) + diphosphate. Functionally, DNA-dependent RNA polymerase catalyzes the transcription of DNA into RNA using the four ribonucleoside triphosphates as substrates. In Xanthomonas campestris pv. campestris (strain 8004), this protein is DNA-directed RNA polymerase subunit beta.